The sequence spans 525 residues: MRRRRRRDGFYPAPDFRDREAEDMAGVFDIDLDQPEDAGSEDELEEGGQLNESMDHGGVGPYELGMEHCEKFEISETSVNRGPEKIRPECFELLRVLGKGGYGKVFQVRKVTGANTGKIFAMKVLKKAMIVRNAKDTAHTKAERNILEEVKHPFIVDLIYAFQTGGKLYLILEYLSGGELFMQLEREGIFMEDTACFYLAEISMALGHLHQKGIIYRDLKPENIMLNHQGHVKLTDFGLCKESIHDGTVTHTFCGTIEYMAPEILMRSGHNRAVDWWSLGALMYDMLTGAPPFTGENRKKTIDKILKCKLNLPPYLTQEARDLLKKLLKRNAASRLGAGPGDAGEVQAHPFFRHINWEELLARKVEPPFKPLLQSEEDVSQFDSKFTRQTPVDSPDDSTLSESANQVFLGFTYVAPSVLESVKEKFSFEPKIRSPRRFIGSPRTPVSPVKFSPGDFWGRGASASTANPQTPVEYPMETSGIEQMDVTTSGEASAPLPIRQPNSGPYKKQAFPMISKRPEHLRMNL.

The interval 1 to 54 (MRRRRRRDGFYPAPDFRDREAEDMAGVFDIDLDQPEDAGSEDELEEGGQLNESM) is disordered. Positions 28–32 (FDIDL) match the TOS motif motif. The segment covering 30 to 46 (IDLDQPEDAGSEDELEE) has biased composition (acidic residues). Positions 91-352 (FELLRVLGKG…AGEVQAHPFF (262 aa)) constitute a Protein kinase domain. Residues 97–105 (LGKGGYGKV) and Lys123 each bind ATP. The active-site Proton acceptor is Asp218. At Thr252 the chain carries Phosphothreonine; by PDPK1. An AGC-kinase C-terminal domain is found at 353-423 (RHINWEELLA…VAPSVLESVK (71 aa)). The interval 380 to 399 (SQFDSKFTRQTPVDSPDDST) is disordered. Polar residues predominate over residues 381-399 (QFDSKFTRQTPVDSPDDST). Ser394 carries the phosphoserine modification. Thr412 is subject to Phosphothreonine; by MTOR, NEK6 and NEK7. Residues 424–525 (EKFSFEPKIR…KRPEHLRMNL (102 aa)) are autoinhibitory domain. Ser434 and Ser441 each carry phosphoserine. Thr444 is subject to Phosphothreonine. 2 positions are modified to phosphoserine: Ser447 and Ser452. The segment at 486–509 (VTTSGEASAPLPIRQPNSGPYKKQ) is disordered. Lys516 carries the post-translational modification N6-acetyllysine.

It belongs to the protein kinase superfamily. AGC Ser/Thr protein kinase family. S6 kinase subfamily. Interacts with PPP1R9A/neurabin-1. Interacts with RPTOR. Interacts with IRS1. Interacts with EIF3B and EIF3C. Interacts with TRAF4. Interacts with POLDIP3. Interacts (via N-terminus) with IER5. Post-translationally, phosphorylation at Thr-412 is regulated by mTORC1. The phosphorylation at this site is maintained by an agonist-dependent autophosphorylation mechanism. Activated by phosphorylation at Thr-252 by PDPK1. Dephosphorylation by PPP1CC at Thr-412 in mitochondrion.

The protein resides in the cytoplasm. It is found in the synapse. The protein localises to the synaptosome. It localises to the mitochondrion outer membrane. Its subcellular location is the mitochondrion. The enzyme catalyses L-seryl-[protein] + ATP = O-phospho-L-seryl-[protein] + ADP + H(+). It catalyses the reaction L-threonyl-[protein] + ATP = O-phospho-L-threonyl-[protein] + ADP + H(+). Activation requires multiple phosphorylation events on serine/threonine residues. Activation appears to be first mediated by phosphorylation of multiple sites in the autoinhibitory domain, which facilitates phosphorylation at Thr-412, disrupting the autoinhibitory mechanism and allowing phosphorylation of Thr-252 by PDPK1. The active conformation of the kinase is believed to be stabilized by a mechanism involving three conserved phosphorylation sites located in the kinase domain activation loop (Thr-252) and in the AGC-kinase C-terminal domain (Ser-394 in the middle of the tail/linker region and Thr-412 within a hydrophobic motif at its end). Activated by mTORC1; isoform Alpha I and isoform Alpha II are sensitive to rapamycin, which inhibits activating phosphorylation at Thr-412. Activated by PDPK1. Serine/threonine-protein kinase that acts downstream of mTOR signaling in response to growth factors and nutrients to promote cell proliferation, cell growth and cell cycle progression. Regulates protein synthesis through phosphorylation of EIF4B, RPS6 and EEF2K, and contributes to cell survival by repressing the pro-apoptotic function of BAD. Under conditions of nutrient depletion, the inactive form associates with the EIF3 translation initiation complex. Upon mitogenic stimulation, phosphorylation by the mechanistic target of rapamycin complex 1 (mTORC1) leads to dissociation from the EIF3 complex and activation. The active form then phosphorylates and activates several substrates in the pre-initiation complex, including the EIF2B complex and the cap-binding complex component EIF4B. Also controls translation initiation by phosphorylating a negative regulator of EIF4A, PDCD4, targeting it for ubiquitination and subsequent proteolysis. Promotes initiation of the pioneer round of protein synthesis by phosphorylating POLDIP3/SKAR. In response to IGF1, activates translation elongation by phosphorylating EEF2 kinase (EEF2K), which leads to its inhibition and thus activation of EEF2. Also plays a role in feedback regulation of mTORC2 by mTORC1 by phosphorylating MAPKAP1/SIN1, MTOR and RICTOR, resulting in the inhibition of mTORC2 and AKT1 signaling. Also involved in feedback regulation of mTORC1 and mTORC2 by phosphorylating DEPTOR. Mediates cell survival by phosphorylating the pro-apoptotic protein BAD and suppressing its pro-apoptotic function. Phosphorylates mitochondrial URI1 leading to dissociation of a URI1-PPP1CC complex. The free mitochondrial PPP1CC can then dephosphorylate RPS6KB1 at Thr-412, which is proposed to be a negative feedback mechanism for the RPS6KB1 anti-apoptotic function. Mediates TNF-alpha-induced insulin resistance by phosphorylating IRS1 at multiple serine residues, resulting in accelerated degradation of IRS1. In cells lacking functional TSC1-2 complex, constitutively phosphorylates and inhibits GSK3B. May be involved in cytoskeletal rearrangement through binding to neurabin. Phosphorylates and activates the pyrimidine biosynthesis enzyme CAD, downstream of MTOR. Following activation by mTORC1, phosphorylates EPRS and thereby plays a key role in fatty acid uptake by adipocytes and also most probably in interferon-gamma-induced translation inhibition. The chain is Ribosomal protein S6 kinase beta-1 (RPS6KB1) from Oryctolagus cuniculus (Rabbit).